A 36-amino-acid polypeptide reads, in one-letter code: U-metritoxin-Msn1a (36 aa).

The ShKT domain maps to 4–36; that stretch reads CKDKLPACGEYRGSFCKLEKVKSNCEKTCGVKC. Cystine bridges form between Cys-4–Cys-36, Cys-11–Cys-28, and Cys-19–Cys-32.

This sequence belongs to the sea anemone type 1 potassium channel toxin family. Type 1b subfamily.

It is found in the secreted. The protein resides in the nematocyst. Functionally, has hemolytic activity. Inhibits voltage-gated potassium channels (Kv1/KCNA). This is U-metritoxin-Msn1a from Metridium senile (Brown sea anemone).